The sequence spans 269 residues: Phosphate import ATP-binding protein PstB 1 (269 aa).

Positions 23–264 (LSTEDLNVYY…PKIKAAEDYV (242 aa)) constitute an ABC transporter domain. 55-62 (GASGSGKS) contacts ATP.

It belongs to the ABC transporter superfamily. Phosphate importer (TC 3.A.1.7) family. The complex is composed of two ATP-binding proteins (PstB), two transmembrane proteins (PstC and PstA) and a solute-binding protein (PstS).

The protein localises to the cell membrane. It carries out the reaction phosphate(out) + ATP + H2O = ADP + 2 phosphate(in) + H(+). Its function is as follows. Part of the ABC transporter complex PstSACB involved in phosphate import. Responsible for energy coupling to the transport system. The chain is Phosphate import ATP-binding protein PstB 1 from Latilactobacillus sakei subsp. sakei (strain 23K) (Lactobacillus sakei subsp. sakei).